Consider the following 388-residue polypeptide: Succinate--CoA ligase [ADP-forming] subunit beta (388 aa).

The 236-residue stretch at 9–244 (KEILRKFGVA…LDEEDPAEIE (236 aa)) folds into the ATP-grasp domain. ATP is bound by residues lysine 46, 53 to 55 (GRG), glutamate 99, alanine 102, and glutamate 107. Positions 199 and 213 each coordinate Mg(2+). Residues asparagine 264 and 321–323 (GIM) each bind substrate.

This sequence belongs to the succinate/malate CoA ligase beta subunit family. Heterotetramer of two alpha and two beta subunits. It depends on Mg(2+) as a cofactor.

It carries out the reaction succinate + ATP + CoA = succinyl-CoA + ADP + phosphate. The enzyme catalyses GTP + succinate + CoA = succinyl-CoA + GDP + phosphate. It functions in the pathway carbohydrate metabolism; tricarboxylic acid cycle; succinate from succinyl-CoA (ligase route): step 1/1. Succinyl-CoA synthetase functions in the citric acid cycle (TCA), coupling the hydrolysis of succinyl-CoA to the synthesis of either ATP or GTP and thus represents the only step of substrate-level phosphorylation in the TCA. The beta subunit provides nucleotide specificity of the enzyme and binds the substrate succinate, while the binding sites for coenzyme A and phosphate are found in the alpha subunit. The sequence is that of Succinate--CoA ligase [ADP-forming] subunit beta from Burkholderia cenocepacia (strain ATCC BAA-245 / DSM 16553 / LMG 16656 / NCTC 13227 / J2315 / CF5610) (Burkholderia cepacia (strain J2315)).